We begin with the raw amino-acid sequence, 131 residues long: Small ribosomal subunit protein uS8c (131 aa).

The protein belongs to the universal ribosomal protein uS8 family. Part of the 30S ribosomal subunit.

Its subcellular location is the plastid. The protein localises to the chloroplast. One of the primary rRNA binding proteins, it binds directly to 16S rRNA central domain where it helps coordinate assembly of the platform of the 30S subunit. In Phalaenopsis aphrodite subsp. formosana (Moth orchid), this protein is Small ribosomal subunit protein uS8c (rps8).